We begin with the raw amino-acid sequence, 227 residues long: 6-phosphogluconolactonase (227 aa).

Belongs to the glucosamine/galactosamine-6-phosphate isomerase family. 6-phosphogluconolactonase subfamily.

It carries out the reaction 6-phospho-D-glucono-1,5-lactone + H2O = 6-phospho-D-gluconate + H(+). The protein operates within carbohydrate degradation; pentose phosphate pathway; D-ribulose 5-phosphate from D-glucose 6-phosphate (oxidative stage): step 2/3. Hydrolysis of 6-phosphogluconolactone to 6-phosphogluconate. The sequence is that of 6-phosphogluconolactonase (pgl) from Helicobacter pylori (strain ATCC 700392 / 26695) (Campylobacter pylori).